Reading from the N-terminus, the 228-residue chain is Phosphoglycolate phosphatase (228 aa).

D9 (nucleophile) is an active-site residue. Residues D9 and D11 each coordinate Mg(2+). K151 is a binding site for substrate. Positions 174 and 178 each coordinate Mg(2+).

Belongs to the archaeal SPP-like hydrolase family. It depends on Mg(2+) as a cofactor.

The catalysed reaction is 2-phosphoglycolate + H2O = glycolate + phosphate. In terms of biological role, catalyzes the dephosphorylation of 2-phosphoglycolate. The polypeptide is Phosphoglycolate phosphatase (Pyrobaculum islandicum (strain DSM 4184 / JCM 9189 / GEO3)).